The sequence spans 128 residues: MTFDLLKELKRIYKHFENIDLEQFERDLIECGFGKIKPGPLATDEVLTEEDIAKYREIIMKSQTCNVNTHNQIVIKINLKEINADNKMYCKFRKGYKFKEDIKVGEESSYIITLQQDSLHICNNYEVA.

This is an uncharacterized protein from Methanocaldococcus jannaschii (strain ATCC 43067 / DSM 2661 / JAL-1 / JCM 10045 / NBRC 100440) (Methanococcus jannaschii).